Reading from the N-terminus, the 150-residue chain is uncharacterized protein (150 aa).

An HTH marR-type domain is found at 1–133 (MNDILREIGM…ISALLHRVRK (133 aa)). Positions 47 to 70 (QEKLAEMIKVDRTTAARAIKKLEM) form a DNA-binding region, H-T-H motif.

This is an uncharacterized protein from Bacillus subtilis (strain 168).